The primary structure comprises 139 residues: Immunogenic miracidial antigen 8I (139 aa).

Residues 61–139 form a disordered region; the sequence is IDVGDEDYHD…PKKYGSGYKH (79 aa). Residues 64–85 are compositionally biased toward acidic residues; that stretch reads GDEDYHDGDDDVDYTDDVDDVD. Positions 90-103 are enriched in polar residues; that stretch reads SPSQLLQGGYQRNQ.

The protein belongs to the immunogenic miracidial antigen family.

The polypeptide is Immunogenic miracidial antigen 8I (8I) (Schistosoma japonicum (Blood fluke)).